The sequence spans 313 residues: 4-hydroxy-3-methylbut-2-enyl diphosphate reductase (313 aa).

Cysteine 20 contributes to the [4Fe-4S] cluster binding site. (2E)-4-hydroxy-3-methylbut-2-enyl diphosphate contacts are provided by histidine 49 and histidine 82. The dimethylallyl diphosphate site is built by histidine 49 and histidine 82. Residues histidine 49 and histidine 82 each coordinate isopentenyl diphosphate. Cysteine 104 serves as a coordination point for [4Fe-4S] cluster. Histidine 132 is a (2E)-4-hydroxy-3-methylbut-2-enyl diphosphate binding site. A dimethylallyl diphosphate-binding site is contributed by histidine 132. An isopentenyl diphosphate-binding site is contributed by histidine 132. The Proton donor role is filled by glutamate 134. Residue threonine 172 participates in (2E)-4-hydroxy-3-methylbut-2-enyl diphosphate binding. Residue cysteine 201 participates in [4Fe-4S] cluster binding. (2E)-4-hydroxy-3-methylbut-2-enyl diphosphate is bound by residues serine 229, serine 230, asparagine 231, and serine 273. Residues serine 229, serine 230, asparagine 231, and serine 273 each contribute to the dimethylallyl diphosphate site. Positions 229, 230, 231, and 273 each coordinate isopentenyl diphosphate.

This sequence belongs to the IspH family. Requires [4Fe-4S] cluster as cofactor.

The catalysed reaction is isopentenyl diphosphate + 2 oxidized [2Fe-2S]-[ferredoxin] + H2O = (2E)-4-hydroxy-3-methylbut-2-enyl diphosphate + 2 reduced [2Fe-2S]-[ferredoxin] + 2 H(+). It carries out the reaction dimethylallyl diphosphate + 2 oxidized [2Fe-2S]-[ferredoxin] + H2O = (2E)-4-hydroxy-3-methylbut-2-enyl diphosphate + 2 reduced [2Fe-2S]-[ferredoxin] + 2 H(+). Its pathway is isoprenoid biosynthesis; dimethylallyl diphosphate biosynthesis; dimethylallyl diphosphate from (2E)-4-hydroxy-3-methylbutenyl diphosphate: step 1/1. It participates in isoprenoid biosynthesis; isopentenyl diphosphate biosynthesis via DXP pathway; isopentenyl diphosphate from 1-deoxy-D-xylulose 5-phosphate: step 6/6. Its function is as follows. Catalyzes the conversion of 1-hydroxy-2-methyl-2-(E)-butenyl 4-diphosphate (HMBPP) into a mixture of isopentenyl diphosphate (IPP) and dimethylallyl diphosphate (DMAPP). Acts in the terminal step of the DOXP/MEP pathway for isoprenoid precursor biosynthesis. This chain is 4-hydroxy-3-methylbut-2-enyl diphosphate reductase, found in Desulfotalea psychrophila (strain LSv54 / DSM 12343).